The following is a 307-amino-acid chain: Streptomycin 6-kinase (307 aa).

133–145 lines the streptomycin pocket; sequence LAGLLNRLHSVPA. D201 serves as the catalytic Proton acceptor.

It belongs to the aminoglycoside phosphotransferase family.

The enzyme catalyses streptomycin + ATP = streptomycin 6-phosphate + ADP + H(+). The aminoglycoside phosphotransferases achieve inactivation of their antibiotic substrates by phosphorylation. In Streptomyces griseus, this protein is Streptomycin 6-kinase (aphD).